A 272-amino-acid chain; its full sequence is Pantothenate synthetase (272 aa).

ATP is bound at residue 27 to 34; that stretch reads MGALHNGH. The active-site Proton donor is the histidine 34. (R)-pantoate is bound at residue glutamine 58. Glutamine 58 is a binding site for beta-alanine. Residue 143 to 146 participates in ATP binding; it reads GKKD. Glutamine 149 provides a ligand contact to (R)-pantoate. Residues valine 172 and 180–183 each bind ATP; that span reads LSSR.

This sequence belongs to the pantothenate synthetase family. Homodimer.

It localises to the cytoplasm. The enzyme catalyses (R)-pantoate + beta-alanine + ATP = (R)-pantothenate + AMP + diphosphate + H(+). It functions in the pathway cofactor biosynthesis; (R)-pantothenate biosynthesis; (R)-pantothenate from (R)-pantoate and beta-alanine: step 1/1. Its function is as follows. Catalyzes the condensation of pantoate with beta-alanine in an ATP-dependent reaction via a pantoyl-adenylate intermediate. In Aliarcobacter butzleri (strain RM4018) (Arcobacter butzleri), this protein is Pantothenate synthetase.